Consider the following 536-residue polypeptide: SNW domain-containing protein 1 (536 aa).

Residues 1–46 are disordered; that stretch reads MALTSFLPAPTQLSQDQLEAEEKARSQRSRQTSLVSSRREPPPYGY. At Ala-2 the chain carries N-acetylalanine. Phosphoserine is present on Ser-14. Residue Lys-23 forms a Glycyl lysine isopeptide (Lys-Gly) (interchain with G-Cter in SUMO2) linkage. The segment at 59–79 is interaction with PPIL1; that stretch reads GDGGAFPEIHVAQYPLDMGRK. Glycyl lysine isopeptide (Lys-Gly) (interchain with G-Cter in SUMO2) cross-links involve residues Lys-81, Lys-97, Lys-115, Lys-122, Lys-141, Lys-158, and Lys-170. Positions 174–339 are SNW; the sequence is AQYIRYTPSQ…KARERRAGIK (166 aa). Phosphoserine is present on residues Ser-182 and Ser-190. Lys-193 is covalently cross-linked (Glycyl lysine isopeptide (Lys-Gly) (interchain with G-Cter in SUMO2)). Residues 209–233 form a disordered region; the sequence is PPRFKINKKIPRGPPSPPAPVMHSP. A phosphoserine mark is found at Ser-224, Ser-232, and Ser-234. Residues Lys-240, Lys-258, Lys-286, Lys-339, Lys-344, Lys-416, and Lys-441 each participate in a glycyl lysine isopeptide (Lys-Gly) (interchain with G-Cter in SUMO2) cross-link. The interval 311-386 is disordered; it reads KMAQKEKEKH…RSKLQRNENR (76 aa). A Phosphoserine modification is found at Ser-446. Lys-452 is covalently cross-linked (Glycyl lysine isopeptide (Lys-Gly) (interchain with G-Cter in SUMO2)). Basic and acidic residues-rich tracts occupy residues 470 to 489 and 503 to 530; these read NRFV…RGRE and KFLE…EHEG. The tract at residues 470–536 is disordered; sequence NRFVPDKEFS…EHEGKKRRKE (67 aa). Ser-479 and Ser-481 each carry phosphoserine. Lys-509 is covalently cross-linked (Glycyl lysine isopeptide (Lys-Gly) (interchain with G-Cter in SUMO2)).

Belongs to the SNW family. Identified in the spliceosome C complex. Associates with U4/U6-U5 tri-small nuclear ribonucleoproteins (U4/U6-U5 tri-snRNPs). Component of the minor spliceosome, which splices U12-type introns. Interacts with SKI, SMAD2,SMAD3, RBPJ, RB1, PABPN1, MAGEA1, SIRT1, FOXN3, U2AF2, DAXX and ATP1B4. Interacts with PPIL1. Interacts with VDR and RXRA; preferentially associates with VDR:RXRA heterodimers. Interacts with NCOR2. Interacts with MAML1. Interacts with NOTCH1 NICD; the interaction involves multimerized NOTCH1 NICD. Forms a complex with NOTCH1 NICD and MAML1; the association is dissociated by RBPJ. Associates with positive transcription elongation factor b (P-TEFb). Component of the SNARP complex which consists at least of SNIP1, SNW1, THRAP3, BCLAF1 and PNN. As to quaternary structure, (Microbial infection) Interacts with human papillomavirus type-16 (HPV16) E7 protein. In terms of assembly, (Microbial infection) Interacts with EBV EBNA2; EBNA2 competes with NCOR2 for interaction with SNW1.

The protein localises to the nucleus. Its function is as follows. Involved in pre-mRNA splicing as component of the spliceosome. As a component of the minor spliceosome, involved in the splicing of U12-type introns in pre-mRNAs. Required for the specific splicing of CDKN1A pre-mRNA; the function probably involves the recruitment of U2AF2 to the mRNA. May recruit PPIL1 to the spliceosome. May be involved in cyclin-D1/CCND1 mRNA stability through the SNARP complex which associates with both the 3'end of the CCND1 gene and its mRNA. Involved in transcriptional regulation. Modulates TGF-beta-mediated transcription via association with SMAD proteins, MYOD1-mediated transcription via association with PABPN1, RB1-mediated transcriptional repression, and retinoid-X receptor (RXR)- and vitamin D receptor (VDR)-dependent gene transcription in a cell line-specific manner probably involving coactivators NCOA1 and GRIP1. Is involved in NOTCH1-mediated transcriptional activation. Binds to multimerized forms of Notch intracellular domain (NICD) and is proposed to recruit transcriptional coactivators such as MAML1 to form an intermediate preactivation complex which associates with DNA-bound CBF-1/RBPJ to form a transcriptional activation complex by releasing SNW1 and redundant NOTCH1 NICD. Functionally, (Microbial infection) Is recruited by HIV-1 Tat to Tat:P-TEFb:TAR RNA complexes and is involved in Tat transcription by recruitment of MYC, MEN1 and TRRAP to the HIV promoter. In terms of biological role, (Microbial infection) Proposed to be involved in transcriptional activation by EBV EBNA2 of CBF-1/RBPJ-repressed promoters. The protein is SNW domain-containing protein 1 (SNW1) of Homo sapiens (Human).